The primary structure comprises 192 residues: Fe/S biogenesis protein NfuA (192 aa).

The [4Fe-4S] cluster site is built by Cys149 and Cys152.

The protein belongs to the NfuA family. As to quaternary structure, homodimer. It depends on [4Fe-4S] cluster as a cofactor.

Functionally, involved in iron-sulfur cluster biogenesis. Binds a 4Fe-4S cluster, can transfer this cluster to apoproteins, and thereby intervenes in the maturation of Fe/S proteins. Could also act as a scaffold/chaperone for damaged Fe/S proteins. The protein is Fe/S biogenesis protein NfuA of Proteus mirabilis (strain HI4320).